Here is a 232-residue protein sequence, read N- to C-terminus: Large ribosomal subunit protein uL1 (232 aa).

It belongs to the universal ribosomal protein uL1 family. In terms of assembly, part of the 50S ribosomal subunit.

Its function is as follows. Binds directly to 23S rRNA. The L1 stalk is quite mobile in the ribosome, and is involved in E site tRNA release. Functionally, protein L1 is also a translational repressor protein, it controls the translation of the L11 operon by binding to its mRNA. This is Large ribosomal subunit protein uL1 from Rhizobium rhizogenes (strain K84 / ATCC BAA-868) (Agrobacterium radiobacter).